Here is a 300-residue protein sequence, read N- to C-terminus: Acetylglutamate kinase (300 aa).

Substrate-binding positions include 73 to 74 (GG), Arg-95, and Asn-197.

Belongs to the acetylglutamate kinase family. ArgB subfamily.

Its subcellular location is the cytoplasm. The catalysed reaction is N-acetyl-L-glutamate + ATP = N-acetyl-L-glutamyl 5-phosphate + ADP. It functions in the pathway amino-acid biosynthesis; L-arginine biosynthesis; N(2)-acetyl-L-ornithine from L-glutamate: step 2/4. In terms of biological role, catalyzes the ATP-dependent phosphorylation of N-acetyl-L-glutamate. This Bordetella petrii (strain ATCC BAA-461 / DSM 12804 / CCUG 43448) protein is Acetylglutamate kinase.